The sequence spans 254 residues: Demethylmenaquinone methyltransferase (254 aa).

Residues threonine 62, aspartate 80, 122–123 (DG), and serine 139 contribute to the S-adenosyl-L-methionine site.

It belongs to the class I-like SAM-binding methyltransferase superfamily. MenG/UbiE family.

The catalysed reaction is a 2-demethylmenaquinol + S-adenosyl-L-methionine = a menaquinol + S-adenosyl-L-homocysteine + H(+). It functions in the pathway quinol/quinone metabolism; menaquinone biosynthesis; menaquinol from 1,4-dihydroxy-2-naphthoate: step 2/2. Its function is as follows. Methyltransferase required for the conversion of demethylmenaquinol (DMKH2) to menaquinol (MKH2). The polypeptide is Demethylmenaquinone methyltransferase (Parafrankia sp. (strain EAN1pec)).